The following is a 343-amino-acid chain: Phosphoribosylformylglycinamidine cyclo-ligase (343 aa).

Belongs to the AIR synthase family.

It localises to the cytoplasm. The catalysed reaction is 2-formamido-N(1)-(5-O-phospho-beta-D-ribosyl)acetamidine + ATP = 5-amino-1-(5-phospho-beta-D-ribosyl)imidazole + ADP + phosphate + H(+). It functions in the pathway purine metabolism; IMP biosynthesis via de novo pathway; 5-amino-1-(5-phospho-D-ribosyl)imidazole from N(2)-formyl-N(1)-(5-phospho-D-ribosyl)glycinamide: step 2/2. In Carboxydothermus hydrogenoformans (strain ATCC BAA-161 / DSM 6008 / Z-2901), this protein is Phosphoribosylformylglycinamidine cyclo-ligase.